A 412-amino-acid polypeptide reads, in one-letter code: ATP phosphoribosyltransferase regulatory subunit (412 aa).

Belongs to the class-II aminoacyl-tRNA synthetase family. HisZ subfamily. Heteromultimer composed of HisG and HisZ subunits.

It is found in the cytoplasm. Its pathway is amino-acid biosynthesis; L-histidine biosynthesis; L-histidine from 5-phospho-alpha-D-ribose 1-diphosphate: step 1/9. Required for the first step of histidine biosynthesis. May allow the feedback regulation of ATP phosphoribosyltransferase activity by histidine. The sequence is that of ATP phosphoribosyltransferase regulatory subunit from Dehalococcoides mccartyi (strain ATCC BAA-2266 / KCTC 15142 / 195) (Dehalococcoides ethenogenes (strain 195)).